Reading from the N-terminus, the 78-residue chain is Defensin beta 136 (78 aa).

An N-terminal signal peptide occupies residues 1–21; that stretch reads MNLCLSSLLFFLVILLPSGKG. 3 disulfide bridges follow: Cys33-Cys60, Cys40-Cys54, and Cys44-Cys61.

Belongs to the beta-defensin family.

The protein resides in the secreted. Host defense peptide that exhibits antimicrobial and antifungal activity. Exhibits antimicrobial activity against E.coli, S.aureus and C.albicans (in vitro). Has high lipopolysaccharide (LPS)-binding affinity, and may thereby be involved in immunoregulation through LPS neutralization. In Pan troglodytes (Chimpanzee), this protein is Defensin beta 136 (DEFB136).